Reading from the N-terminus, the 63-residue chain is Large ribosomal subunit protein uL29 (63 aa).

The protein belongs to the universal ribosomal protein uL29 family.

In Actinobacillus pleuropneumoniae serotype 5b (strain L20), this protein is Large ribosomal subunit protein uL29.